The sequence spans 219 residues: Endonuclease III (219 aa).

Residues M117–A136 enclose the HhH domain. Positions 197, 204, 207, and 213 each coordinate [4Fe-4S] cluster.

Belongs to the Nth/MutY family. [4Fe-4S] cluster serves as cofactor.

It catalyses the reaction 2'-deoxyribonucleotide-(2'-deoxyribose 5'-phosphate)-2'-deoxyribonucleotide-DNA = a 3'-end 2'-deoxyribonucleotide-(2,3-dehydro-2,3-deoxyribose 5'-phosphate)-DNA + a 5'-end 5'-phospho-2'-deoxyribonucleoside-DNA + H(+). Its function is as follows. DNA repair enzyme that has both DNA N-glycosylase activity and AP-lyase activity. The DNA N-glycosylase activity releases various damaged pyrimidines from DNA by cleaving the N-glycosidic bond, leaving an AP (apurinic/apyrimidinic) site. The AP-lyase activity cleaves the phosphodiester bond 3' to the AP site by a beta-elimination, leaving a 3'-terminal unsaturated sugar and a product with a terminal 5'-phosphate. This Synechocystis sp. (strain ATCC 27184 / PCC 6803 / Kazusa) protein is Endonuclease III.